We begin with the raw amino-acid sequence, 263 residues long: Small ribosomal subunit protein eS4 (263 aa).

Residues 42-104 (LPLIVFLRNR…TGEHFRLVYD (63 aa)) enclose the S4 RNA-binding domain.

It belongs to the eukaryotic ribosomal protein eS4 family.

The sequence is that of Small ribosomal subunit protein eS4 (RPS4Y1) from Pongo pygmaeus (Bornean orangutan).